A 261-amino-acid chain; its full sequence is Cell division protein DivIB (261 aa).

The Cytoplasmic segment spans residues Met1–Arg27. The chain crosses the membrane as a helical span at residues Leu28 to Pro48. Residues Ser47 to Glu117 form an alpha region. Residues Leu49–Pro261 are Extracellular-facing. The 69-residue stretch at Gly50 to Trp118 folds into the POTRA domain. A beta region spans residues Trp118 to Arg230. Positions Asn231–Ser260 are gamma.

Belongs to the FtsQ/DivIB family. DivIB subfamily.

It is found in the cell membrane. Its function is as follows. Cell division protein that may be involved in stabilizing or promoting the assembly of the division complex. This Geobacillus kaustophilus (strain HTA426) protein is Cell division protein DivIB.